Consider the following 690-residue polypeptide: Calpain-9 (690 aa).

Residues M1 to H23 are disordered. The 296-residue stretch at L42–T337 folds into the Calpain catalytic domain. Residues L81, G83, and D88 each coordinate Ca(2+). The active site involves C97. E167 contacts Ca(2+). Catalysis depends on residues H254 and N278. 5 residues coordinate Ca(2+): E284, D291, L312, D314, and E316. Residues P338 to Q521 are domain III. 3 consecutive EF-hand domains span residues E518 to K552, L561 to F589, and D591 to Q626. The tract at residues Q522 to I690 is domain IV. 10 residues coordinate Ca(2+): D574, S576, N578, K580, E585, D604, D606, S608, T610, and E615.

The protein belongs to the peptidase C2 family. As to expression, predominantly expressed in stomach and small intestine, although low levels of expression in other organs.

It is found in the cytoplasm. Its function is as follows. Calcium-regulated non-lysosomal thiol-protease. This chain is Calpain-9 (Capn9), found in Mus musculus (Mouse).